We begin with the raw amino-acid sequence, 550 residues long: NAD(P)H-quinone oxidoreductase chain 4 3 (550 aa).

14 helical membrane-spanning segments follow: residues 5 to 25 (FPWL…IPLL), 36 to 56 (YALI…WQHF), 86 to 106 (ISAP…FSAW), 114 to 134 (LFYA…VAKD), 135 to 155 (LFLF…LVCI), 168 to 188 (FLLY…ALSL), 212 to 232 (MWLY…FPLH), 243 to 263 (SSPV…YGLM), 277 to 297 (FAPL…FSSF), 311 to 331 (VSHM…GING), 332 to 352 (AMLQ…LAGV), 375 to 395 (VFAM…MSGF), 418 to 438 (ITVF…LSML), and 489 to 509 (IFIA…PKLL).

The protein belongs to the complex I subunit 4 family.

Its subcellular location is the cellular thylakoid membrane. The enzyme catalyses a plastoquinone + NADH + (n+1) H(+)(in) = a plastoquinol + NAD(+) + n H(+)(out). The catalysed reaction is a plastoquinone + NADPH + (n+1) H(+)(in) = a plastoquinol + NADP(+) + n H(+)(out). In terms of biological role, NDH-1 shuttles electrons from NAD(P)H, via FMN and iron-sulfur (Fe-S) centers, to quinones in the respiratory chain. The immediate electron acceptor for the enzyme in this species is believed to be plastoquinone. Couples the redox reaction to proton translocation (for every two electrons transferred, four hydrogen ions are translocated across the cytoplasmic membrane), and thus conserves the redox energy in a proton gradient. In Picosynechococcus sp. (strain ATCC 27264 / PCC 7002 / PR-6) (Agmenellum quadruplicatum), this protein is NAD(P)H-quinone oxidoreductase chain 4 3.